The sequence spans 437 residues: Nuclear envelope integral membrane protein 1 (437 aa).

A signal peptide spans 1–44; sequence MAGGIKVSVWSAVGPGPRCWGAGGGGGATWLLLVVAGCVVCGSA. An N-linked (GlcNAc...) asparagine glycan is attached at asparagine 123. A run of 5 helical transmembrane segments spans residues 159-179, 183-203, 214-234, 244-264, and 288-308; these read PKLF…DLLS, IFYY…IVIF, PIYV…QLVF, YWHY…AVCY, and GLMY…VIAL. The segment at 184 to 295 is a; required for its colocalization with lamins at the nuclear envelope; that stretch reads FYYSTGMSVG…GLGLMYSSIQ (112 aa). The tract at residues 334–403 is b; required for interaction with RAN-GTP; it reads PVPPRLLTEE…LTPNEVSVHE (70 aa). The required for nuclear localization stretch occupies residues 334–437; the sequence is PVPPRLLTEE…PTFTQNNFLT (104 aa). A phosphoserine mark is found at serine 366, serine 419, and serine 420. The span at 415-425 shows a compositional bias: acidic residues; that stretch reads DEELSSEEEGS. A disordered region spans residues 415 to 437; that stretch reads DEELSSEEEGSEYPTFTQNNFLT. Residues 428 to 437 are compositionally biased toward polar residues; sequence PTFTQNNFLT.

Belongs to the NEMP family. In terms of assembly, homooligomer. Interacts with RAN-GTP. Interacts with EMD. Post-translationally, phosphorylated. Phosphorylation may regulate its interaction with RAN-GTP. In terms of tissue distribution, in the ovary, expression is strongest in primordial follicle oocytes and rapidly declines as oocytes mature and move from the cortex (at protein level).

Its subcellular location is the nucleus inner membrane. It localises to the nucleus envelope. Functionally, together with EMD, contributes to nuclear envelope stiffness in germ cells. Required for female fertility. Essential for normal erythropoiesis. Required for efficient nuclear envelope opening and enucleation during the late stages of erythroblast maturation. The sequence is that of Nuclear envelope integral membrane protein 1 (Nemp1) from Mus musculus (Mouse).